A 277-amino-acid polypeptide reads, in one-letter code: Large ribosomal subunit protein uL2 (277 aa).

2 disordered regions span residues K32 to G58 and V225 to K277. The segment covering Y258–K277 has biased composition (basic residues).

The protein belongs to the universal ribosomal protein uL2 family. As to quaternary structure, part of the 50S ribosomal subunit. Forms a bridge to the 30S subunit in the 70S ribosome.

In terms of biological role, one of the primary rRNA binding proteins. Required for association of the 30S and 50S subunits to form the 70S ribosome, for tRNA binding and peptide bond formation. It has been suggested to have peptidyltransferase activity; this is somewhat controversial. Makes several contacts with the 16S rRNA in the 70S ribosome. The polypeptide is Large ribosomal subunit protein uL2 (Borreliella afzelii (strain PKo) (Borrelia afzelii)).